A 744-amino-acid chain; its full sequence is Zinc finger protein 366 (744 aa).

The disordered stretch occupies residues 206–228 (KQPPEPLLPRKAEPQESEETKQK). A compositionally biased stretch (basic and acidic residues) spans 213–228 (LPRKAEPQESEETKQK). 11 C2H2-type zinc fingers span residues 253-275 (WQCP…ILGH), 281-303 (HACT…MLTH), 309-331 (HKCQ…MMQH), 337-359 (HNCR…EAKH), 365-387 (NICV…LTTH), 393-415 (YNCS…MMKH), 421-443 (YICS…SLTH), 449-471 (HKCG…VLIH), 477-499 (YQCH…MIVH), 505-527 (FKCK…MHLH), and 533-556 (FKCL…KVKH). Residues 455 to 744 (GREFTLLANM…MEKQAVLLGI (290 aa)) form an interaction with NRIP1 region. The PXDLS motif lies at 590 to 594 (PFDLS). 2 disordered regions span residues 603 to 627 (VFQS…NCYE) and 664 to 692 (KEEK…QERD).

Interacts with ESR1 and NRIP1. Interacts (via PXDLS motif) with CTBP1. In terms of tissue distribution, expressed in immature and mature dendritic cells (DCs). Not detected in other blood cell types.

The protein resides in the nucleus. In terms of biological role, has transcriptional repression activity. Acts as a corepressor of ESR1; the function seems to involve CTBP1 and histone deacetylases. The sequence is that of Zinc finger protein 366 from Homo sapiens (Human).